The chain runs to 517 residues: MDIIGGQHLRQMWDDLADVYGHKTALICESSGGVVNRYSYLELNQEINRTANLFYTLGIRKGDKVALHLDNCPEFIFCWFGLAKIGAIMVPINARLLREESAWILQNSQACLLVTSAQFYPMYQQIQQEDATQLRHICLTDVALPADDGVSSFTQLKNQQPATLCYAPPLLTDDTAEILFTSGTTSRPKGVVITHYNLRFAGYYSAWQCALRDDDVYLTVMPAFHIDCQCTAAMAAFSAGATFVLVEKYSARAFWGQVQKYRATITECIPMMIRTLMVQPPSANDRQHRLREVMFYLNLSEQEKDAFCERFGVRLLTSYGMTETIVGIIGDRPGDKRRWPSIGRAGFCYEAEIRDDHNRPLPAGEIGEICIKGVPGKTIFKEYFLNPKATAKVLEADGWLHTGDTGYCDEEGFFYFVDRRCNMIKRGGENVSCVELENIIATHPKIQDIVVVGIKDSIRDEAIKAFVVLNEGETLSEEEFFRFCEQNMAKFKVPSYLEIRKDLPRNCSGKIIRKNLK.

Belongs to the ATP-dependent AMP-binding enzyme family.

It catalyses the reaction 4-(trimethylamino)butanoate + ATP + CoA = 4-(trimethylamino)butanoyl-CoA + AMP + diphosphate. It carries out the reaction crotonobetaine + ATP + CoA = crotonobetainyl-CoA + AMP + diphosphate. The enzyme catalyses (R)-carnitine + ATP + CoA = (R)-carnitinyl-CoA + AMP + diphosphate. Its pathway is amine and polyamine metabolism; carnitine metabolism. Catalyzes the transfer of CoA to carnitine, generating the initial carnitinyl-CoA needed for the CaiB reaction cycle. Also has activity toward crotonobetaine and gamma-butyrobetaine. This is Crotonobetaine/carnitine--CoA ligase from Escherichia coli (strain SE11).